A 330-amino-acid polypeptide reads, in one-letter code: Phytanoyl-CoA hydroxylase-interacting protein (330 aa).

Residues 6 to 115 (TPHSIEINNI…ETVEFCTGDY (110 aa)) enclose the Fibronectin type-III domain. Asn14 and Asn325 each carry an N-linked (GlcNAc...) asparagine glycan.

The protein belongs to the PHYHIP family. As to quaternary structure, interacts with PHYH and ADGRB1. As to expression, highly expressed in the brain.

Its interaction with PHYH suggests a role in the development of the central system. In Homo sapiens (Human), this protein is Phytanoyl-CoA hydroxylase-interacting protein (PHYHIP).